Reading from the N-terminus, the 653-residue chain is tRNA-guanine(15) transglycosylase (653 aa).

Catalysis depends on Asp91, which acts as the Nucleophile. Positions 126 and 193 each coordinate substrate. Residues Cys276, Cys278, and Cys281 each contribute to the Zn(2+) site. The 76-residue stretch at 578–653 folds into the PUA domain; that stretch reads AWRVAVNEES…QAVKTRKGGF (76 aa).

Belongs to the archaeosine tRNA-ribosyltransferase family. It depends on Zn(2+) as a cofactor.

The enzyme catalyses guanosine(15) in tRNA + 7-cyano-7-deazaguanine = 7-cyano-7-carbaguanosine(15) in tRNA + guanine. It participates in tRNA modification; archaeosine-tRNA biosynthesis. Its function is as follows. Exchanges the guanine residue with 7-cyano-7-deazaguanine (preQ0) at position 15 in the dihydrouridine loop (D-loop) of archaeal tRNAs. This chain is tRNA-guanine(15) transglycosylase, found in Methanothermobacter thermautotrophicus (strain ATCC 29096 / DSM 1053 / JCM 10044 / NBRC 100330 / Delta H) (Methanobacterium thermoautotrophicum).